The primary structure comprises 214 residues: Mediator of RNA polymerase II transcription subunit 29 (214 aa).

The interval 1–78 is disordered; the sequence is MMNQMGMHMQ…QQQSQQTEKV (78 aa). The segment covering 15 to 34 has biased composition (gly residues); it reads VPGGPGGPVGMAGGPVGGVG. The span at 44 to 74 shows a compositional bias: low complexity; sequence QMQQQQQVAAQQQQQQQQQQQAQAHQQQSQQ.

It belongs to the Mediator complex subunit 29 family. Component of the Mediator complex.

The protein resides in the nucleus. Its function is as follows. Component of the Mediator complex, a coactivator involved in the regulated transcription of nearly all RNA polymerase II-dependent genes. Mediator functions as a bridge to convey information from gene-specific regulatory proteins to the basal RNA polymerase II transcription machinery. Mediator is recruited to promoters by direct interactions with regulatory proteins and serves as a scaffold for the assembly of a functional preinitiation complex with RNA polymerase II and the general transcription factors. The protein is Mediator of RNA polymerase II transcription subunit 29 (ix) of Aedes aegypti (Yellowfever mosquito).